The primary structure comprises 87 residues: Putative RNase MJ1548 (87 aa).

Residues Arg65 and His70 contribute to the active site. An RX(4)HXY motif motif is present at residues 65–72 (RNAIVHKY). Position 72 is an O-di-AMP-tyrosine (Tyr72).

The protein belongs to the HepT RNase toxin family. As to quaternary structure, homodimer, probably forms a complex with cognate antitoxin MJ1547. In terms of processing, modified by cognate antitoxin MJ1547; probably at least 2 successive AMPylation events occur on Tyr-72.

Probable toxic component of a putative type VII toxin-antitoxin (TA) system, probably an RNase. Probably neutralized by cognate antitoxin MJ1547. Neutralization may be due to AMPylation by antitoxin MJ1547. This is Putative RNase MJ1548 from Methanocaldococcus jannaschii (strain ATCC 43067 / DSM 2661 / JAL-1 / JCM 10045 / NBRC 100440) (Methanococcus jannaschii).